Consider the following 223-residue polypeptide: Serine/threonine/tyrosine-interacting protein (223 aa).

One can recognise a Tyrosine-protein phosphatase domain in the interval 28-176 (EMQEILPGLF…LQEYEAIYLA (149 aa)). The Interaction with FBXW7 signature appears at 76–78 (FQQ). Serine 184, serine 193, and serine 201 each carry phosphoserine. A disordered region spans residues 197-223 (GTTGSLKRTHEEEDDFGTMQVATAQNG).

It belongs to the protein-tyrosine phosphatase family. Non-receptor class subfamily. Interacts with MAPK1; independently of MAPK1 phosphorylation status. Interacts with CARHSP1/Crhsp-24. Interacts (via FQQ motif) with FBXW7 isoforms 1 (via F-box domain) and 3 (via F-box domain); the interaction is direct and prevents FBXW7 interaction with SKP1, a component of the SCF(FBXW7) complex. Does not interact with FBXW7 isoform 2.

The protein localises to the nucleus. Its subcellular location is the cytoplasm. It is found in the cytosol. Catalytically inactive phosphatase. Acts as a nuclear anchor for MAPK1/MAPK3 (ERK1/ERK2). Modulates cell-fate decisions and cell migration by spatiotemporal regulation of MAPK1/MAPK3 (ERK1/ERK2). By binding to the F-box of FBXW7, prevents the assembly of FBXW7 into the SCF E3 ubiquitin-protein ligase complex, and thereby inhibits degradation of its substrates. Plays a role in spermatogenesis. This Homo sapiens (Human) protein is Serine/threonine/tyrosine-interacting protein.